The chain runs to 483 residues: Cobyric acid synthase (483 aa).

One can recognise a GATase cobBQ-type domain in the interval 244–430 (WLRVIAPVLP…LHGLFDHAEA (187 aa)). The active-site Nucleophile is the Cys-325. Residue His-422 is part of the active site.

The protein belongs to the CobB/CobQ family. CobQ subfamily.

It participates in cofactor biosynthesis; adenosylcobalamin biosynthesis. Catalyzes amidations at positions B, D, E, and G on adenosylcobyrinic A,C-diamide. NH(2) groups are provided by glutamine, and one molecule of ATP is hydrogenolyzed for each amidation. This Methylobacillus flagellatus (strain ATCC 51484 / DSM 6875 / VKM B-1610 / KT) protein is Cobyric acid synthase.